The sequence spans 70 residues: Large ribosomal subunit protein bL31 (70 aa).

Positions 16, 18, 37, and 40 each coordinate Zn(2+).

The protein belongs to the bacterial ribosomal protein bL31 family. Type A subfamily. As to quaternary structure, part of the 50S ribosomal subunit. It depends on Zn(2+) as a cofactor.

Binds the 23S rRNA. In Shewanella sediminis (strain HAW-EB3), this protein is Large ribosomal subunit protein bL31.